Here is a 459-residue protein sequence, read N- to C-terminus: MAP kinase-interacting serine/threonine-protein kinase 2 (459 aa).

The disordered stretch occupies residues 28–67; the sequence is LDPAQHGDSDFSPQCEARPDMPSSQPIDIPDAKKRGRKKK. The Nuclear localization signal motif lies at 60–66; that stretch reads KKRGRKK. Residue Ser-74 is modified to Phosphoserine. The region spanning 84–368 is the Protein kinase domain; the sequence is QLQEDVLGEG…AAQVLQHPWV (285 aa). Residues 90–98 and Lys-113 each bind ATP; that span reads LGEGAHARV. 160–162 contributes to the staurosporine binding site; it reads EKM. The active-site Proton acceptor is the Asp-205. Glu-209 is a binding site for staurosporine. Residues Thr-244 and Thr-249 each carry the phosphothreonine modification. Residues Cys-299, Cys-311, and Cys-314 each coordinate Zn(2+). The residue at position 379 (Thr-379) is a Phosphothreonine. A phosphoserine mark is found at Ser-431 and Ser-434. The MAP kinase binding motif lies at 438–442; sequence LAQRR. Ser-446 bears the Phosphoserine mark. Thr-450 is modified (phosphothreonine).

It belongs to the protein kinase superfamily. CAMK Ser/Thr protein kinase family. As to quaternary structure, monomer. Interacts with the C-terminal regions of EIF4G1 and EIF4G2; this interaction is promoted when MAPK pathways are repressed but repressed upon ERK proteins activation. Also binds to dephosphorylated MAPK3/ERK1 and MAPK1/ER2K. Interaction with phosphorylated MAPK3/ERK1 and MAPK1/ER2K protects it from dephosphorylation and inactivation. Interacts with ESR2 and EIF4E in the nucleus. It depends on Mg(2+) as a cofactor. Zn(2+) is required as a cofactor. In terms of processing, dual phosphorylation of Thr-244 and Thr-249 activates the kinase. Phosphorylation of Thr-379 activates the kinase. Phosphorylated upon arsenic trioxide As(2)O(3) treatment. Phosphorylated by MAPK1/ERK2, MAPK11 and MAPK14. Dephosphorylated by PP2A.

It localises to the cytoplasm. It is found in the nucleus. The protein localises to the PML body. It catalyses the reaction L-seryl-[protein] + ATP = O-phospho-L-seryl-[protein] + ADP + H(+). The enzyme catalyses L-threonyl-[protein] + ATP = O-phospho-L-threonyl-[protein] + ADP + H(+). Inhibited by CGP57380 and staurosporine. Functionally, serine/threonine-protein kinase that phosphorylates SFPQ/PSF, HNRNPA1 and EIF4E. May play a role in the response to environmental stress and cytokines. Appears to regulate translation by phosphorylating EIF4E, thus increasing the affinity of this protein for the 7-methylguanosine-containing mRNA cap. Required for mediating PP2A-inhibition-induced EIF4E phosphorylation. Triggers EIF4E shuttling from cytoplasm to nucleus. Enhances the formation of EIF4F complex in pachytene spermatocytes, thus promoting mRNA translation during spermatogenesis. Displays a high basal kinase activity. Acts as a mediator of the suppressive effects of IFNgamma on hematopoiesis. Negative regulator for signals that control generation of arsenic trioxide As(2)O(3)-dependent apoptosis and anti-leukemic responses. Involved in anti-apoptotic signaling in response to serum withdrawal. In Rattus norvegicus (Rat), this protein is MAP kinase-interacting serine/threonine-protein kinase 2 (Mknk2).